The chain runs to 367 residues: Alanine racemase (367 aa).

Residue Lys-40 is the Proton acceptor; specific for D-alanine of the active site. Lys-40 carries the N6-(pyridoxal phosphate)lysine modification. Arg-136 serves as a coordination point for substrate. Tyr-263 functions as the Proton acceptor; specific for L-alanine in the catalytic mechanism. Met-310 is a substrate binding site.

The protein belongs to the alanine racemase family. Pyridoxal 5'-phosphate is required as a cofactor.

It carries out the reaction L-alanine = D-alanine. The protein operates within amino-acid biosynthesis; D-alanine biosynthesis; D-alanine from L-alanine: step 1/1. Its function is as follows. Catalyzes the interconversion of L-alanine and D-alanine. May also act on other amino acids. The polypeptide is Alanine racemase (alr) (Streptococcus pneumoniae (strain Hungary19A-6)).